The following is a 572-amino-acid chain: Receptor-type adenylate cyclase GRESAG 4.2 (572 aa).

Residues 1–225 (RKTLLTFGLN…PNGNALTPAQ (225 aa)) lie on the Extracellular side of the membrane. N-linked (GlcNAc...) asparagine glycosylation is found at Asn10, Asn77, and Asn152. Residues 226 to 251 (LDWCGWCRFACADTGSRLTVFLCCIM) form a helical membrane-spanning segment. Residues 252–572 (RNKRDNDNAP…TVRRLSVALQ (321 aa)) lie on the Cytoplasmic side of the membrane. One can recognise a Guanylate cyclase domain in the interval 269 to 424 (TLIFTDIESS…QTANTAARTE (156 aa)). Asp274 and Asp317 together coordinate Mg(2+).

The protein belongs to the adenylyl cyclase class-3 family. The cofactor is Mg(2+).

It is found in the cell membrane. The catalysed reaction is ATP = 3',5'-cyclic AMP + diphosphate. Could act as a receptor for an unknown ligand. This is Receptor-type adenylate cyclase GRESAG 4.2 (GRESAG 4.2) from Trypanosoma brucei brucei.